The sequence spans 1122 residues: Histone deacetylase 5 (1122 aa).

A disordered region spans residues 1 to 24 (MNSPNESDGMSGREPSLEILPRTS). Lysine 35 is covalently cross-linked (Glycyl lysine isopeptide (Lys-Gly) (interchain with G-Cter in SUMO2)). 2 disordered regions span residues 41–60 (AMPSSMGGGGGGSPSPVELR) and 196–281 (KEPT…SSPL). Residues 247–258 (DSRDDFPLRKTA) are compositionally biased toward basic and acidic residues. Phosphoserine; by AMPK, CaMK1, SIK1 and PKD/PRKD1 is present on serine 259. The span at 272-281 (KVAERRSSPL) shows a compositional bias: basic and acidic residues. Threonine 292 is subject to Phosphothreonine; by PKC. Disordered regions lie at residues 302-343 (GAGP…NIPT) and 481-504 (MRTVGKLPRHRPLSRTQSSPLPQS). The segment covering 312–327 (NSAPGSGPSSPNSSHS) has biased composition (low complexity). Polar residues predominate over residues 328–340 (TIAENGFTGSVPN). The segment covering 494 to 504 (SRTQSSPLPQS) has biased composition (low complexity). Position 498 is a phosphoserine; by AMPK, CaMK1, SIK1 and PKD/PRKD1 (serine 498). N6-acetyllysine is present on lysine 533. The disordered stretch occupies residues 536-625 (TKTGELPRQP…GPDLEEPGAG (90 aa)). A compositionally biased stretch (acidic residues) spans 581 to 621 (STQEDLEEEDEEDDGEEEEDCIQVKDEEGESGAEEGPDLEE). Residues serine 611 and serine 661 each carry the phosphoserine modification. The histone deacetylase stretch occupies residues 684-1028 (GVVYDTFMLK…VSALLSVELQ (345 aa)). Residues cysteine 696, cysteine 698, histidine 704, and cysteine 781 each coordinate Zn(2+). Histidine 833 is an active-site residue. A Nuclear export signal motif is present at residues 1081-1122 (EEAETVSAMALLSVGAEQAQAAAAREHSPRPAEEPMEQEPAL). The interval 1097–1122 (EQAQAAAAREHSPRPAEEPMEQEPAL) is disordered. Basic and acidic residues predominate over residues 1104–1113 (AREHSPRPAE). Serine 1108 bears the Phosphoserine mark.

It belongs to the histone deacetylase family. HD type 2 subfamily. Interacts with AHRR, BAHD1, BCOR, HDAC7, HDAC9, CTBP1, MEF2C, NCOR2, NRIP1, PHB2 and a 14-3-3 chaperone protein. Interacts with BCL6, DDIT3/CHOP, GRK5, KDM5B and MYOCD. Interacts with EP300 in the presence of TFAP2C. Interacts with ANKRA2. Interacts with CUL7 (as part of the 3M complex); negatively regulated by ANKRA2. Interacts with ZBTB7B; the interaction allows the recruitment of HDAC4 on CD8 loci for deacetylation and possible inhibition of CD8 genes expression. Interacts with RARA. Phosphorylated by AMPK, CaMK1, SIK1 and PRKD1 at Ser-259 and Ser-498. The phosphorylation is required for the export to the cytoplasm and inhibition. Phosphorylated by the PKC kinases PKN1 and PKN2, impairing nuclear import. Phosphorylated by GRK5, leading to nuclear export of HDAC5 and allowing MEF2-mediated transcription. Post-translationally, ubiquitinated. Polyubiquitination however does not lead to its degradation. Ubiquitous.

The protein resides in the nucleus. It localises to the cytoplasm. The catalysed reaction is N(6)-acetyl-L-lysyl-[histone] + H2O = L-lysyl-[histone] + acetate. Responsible for the deacetylation of lysine residues on the N-terminal part of the core histones (H2A, H2B, H3 and H4). Histone deacetylation gives a tag for epigenetic repression and plays an important role in transcriptional regulation, cell cycle progression and developmental events. Histone deacetylases act via the formation of large multiprotein complexes. Involved in muscle maturation by repressing transcription of myocyte enhancer MEF2C. During muscle differentiation, it shuttles into the cytoplasm, allowing the expression of myocyte enhancer factors. Involved in the MTA1-mediated epigenetic regulation of ESR1 expression in breast cancer. Serves as a corepressor of RARA and causes its deacetylation. In association with RARA, plays a role in the repression of microRNA-10a and thereby in the inflammatory response. The polypeptide is Histone deacetylase 5 (HDAC5) (Homo sapiens (Human)).